We begin with the raw amino-acid sequence, 150 residues long: UPF0756 membrane protein NT05HA_0561 (150 aa).

The next 4 membrane-spanning stretches (helical) occupy residues 1-21 (MSLQ…LGIF), 52-72 (YGLS…LVSG), 81-101 (AFVS…AWLA), and 128-148 (FLGG…VLIG).

It belongs to the UPF0756 family.

Its subcellular location is the cell membrane. The sequence is that of UPF0756 membrane protein NT05HA_0561 from Aggregatibacter aphrophilus (strain NJ8700) (Haemophilus aphrophilus).